The chain runs to 287 residues: Bifunctional protein FolD (287 aa).

NADP(+) contacts are provided by residues 164–166 (GSS), Ser-189, and Ile-230.

The protein belongs to the tetrahydrofolate dehydrogenase/cyclohydrolase family. In terms of assembly, homodimer.

It carries out the reaction (6R)-5,10-methylene-5,6,7,8-tetrahydrofolate + NADP(+) = (6R)-5,10-methenyltetrahydrofolate + NADPH. The enzyme catalyses (6R)-5,10-methenyltetrahydrofolate + H2O = (6R)-10-formyltetrahydrofolate + H(+). It functions in the pathway one-carbon metabolism; tetrahydrofolate interconversion. Functionally, catalyzes the oxidation of 5,10-methylenetetrahydrofolate to 5,10-methenyltetrahydrofolate and then the hydrolysis of 5,10-methenyltetrahydrofolate to 10-formyltetrahydrofolate. The chain is Bifunctional protein FolD from Aliarcobacter butzleri (strain RM4018) (Arcobacter butzleri).